Here is a 141-residue protein sequence, read N- to C-terminus: Pyrophosphate-energized proton pump (141 aa).

3 consecutive transmembrane segments (helical) span residues 11-31 (GLIATGLLSIVGLGVANTLTV), 46-66 (GTNLFVCGLIGLIVTGLIVVI), and 121-141 (LAGLFGTAIAVTAMLGIAGMI).

Belongs to the H(+)-translocating pyrophosphatase (TC 3.A.10) family. As to quaternary structure, homodimer. Requires Mg(2+) as cofactor.

It is found in the cell inner membrane. The catalysed reaction is diphosphate + H2O + H(+)(in) = 2 phosphate + 2 H(+)(out). In terms of biological role, proton pump that utilizes the energy of pyrophosphate hydrolysis as the driving force for proton movement across the membrane. Generates a proton motive force. This is Pyrophosphate-energized proton pump (hppA) from Anaplasma marginale.